A 320-amino-acid chain; its full sequence is Aminoacyl tRNA synthase complex-interacting multifunctional protein 2 (320 aa).

The tract at residues 82–162 (TPDADLDVTN…HTHSSVKSVP (81 aa)) is interaction with PRKN. The interaction with TP53 stretch occupies residues 162–225 (PENLLKCFGE…FLFSLFGQKH (64 aa)). The 98-residue stretch at 220-317 (LFGQKHNAVN…NLAPFNTALK (98 aa)) folds into the GST C-terminal domain.

Part of the multisynthetase complex (MSC), a multisubunit complex that groups tRNA ligases for Arg (RARS1), Asp (DARS1), Gln (QARS1), Ile (IARS1), Leu (LARS1), Lys (KARS1), Met (MARS1) the bifunctional ligase for Glu and Pro (EPRS1) and the auxiliary subunits AIMP1/p43, AIMP2/p38 and EEF1E1/p18. Interacts (via N-terminus) with KARS1. Interacts with EPRS1. Forms a linear complex that contains MARS1, EEF1E1, EPRS1 and AIMP2 that is at the core of the multisubunit complex. Binds FUBP1 (via C-terminus). Interacts in both its unphosphorylated and phosphorylated forms with p53/TP53 (via N-terminus) in the nucleus following UV irradiation. Interacts (via N-terminus) with PRKN/parkin (via first RING-type domain). Interacts with TARS3. Phosphorylated on serine residues in response to UV irradiation. In terms of processing, ubiquitinated by PRKN, leading to its degradation by the proteasome. Mutant PRKN fails to ubiquitinate AIMP2 efficiently, allowing its accumulation which may contribute to neurodegeneration associated with Parkinson disease.

The protein localises to the cytoplasm. Its subcellular location is the cytosol. The protein resides in the nucleus. Its function is as follows. Required for assembly and stability of the aminoacyl-tRNA synthase complex. Mediates ubiquitination and degradation of FUBP1, a transcriptional activator of MYC, leading to MYC down-regulation which is required for aveolar type II cell differentiation. Blocks MDM2-mediated ubiquitination and degradation of p53/TP53. Functions as a proapoptotic factor. This is Aminoacyl tRNA synthase complex-interacting multifunctional protein 2 (AIMP2) from Homo sapiens (Human).